The primary structure comprises 289 residues: 4-diphosphocytidyl-2-C-methyl-D-erythritol kinase (289 aa).

Lys10 is a catalytic residue. 94–104 is a binding site for ATP; it reads PVAAGLAGGSS. The active site involves Asp136.

Belongs to the GHMP kinase family. IspE subfamily.

The enzyme catalyses 4-CDP-2-C-methyl-D-erythritol + ATP = 4-CDP-2-C-methyl-D-erythritol 2-phosphate + ADP + H(+). It participates in isoprenoid biosynthesis; isopentenyl diphosphate biosynthesis via DXP pathway; isopentenyl diphosphate from 1-deoxy-D-xylulose 5-phosphate: step 3/6. Functionally, catalyzes the phosphorylation of the position 2 hydroxy group of 4-diphosphocytidyl-2C-methyl-D-erythritol. The polypeptide is 4-diphosphocytidyl-2-C-methyl-D-erythritol kinase (Geobacillus sp. (strain WCH70)).